The chain runs to 379 residues: Chaperone protein DnaJ (379 aa).

The 66-residue stretch at 5-70 folds into the J domain; the sequence is DYYEVLGVGK…EKKAAYDQYG (66 aa). The segment at 139–217 adopts a CR-type zinc-finger fold; the sequence is GHEAQIRVPH…CHGQGKLKSQ (79 aa). Zn(2+) contacts are provided by Cys-152, Cys-155, Cys-169, Cys-172, Cys-191, Cys-194, Cys-205, and Cys-208. CXXCXGXG motif repeat units lie at residues 152–159, 169–176, 191–198, and 205–212; these read CEHCHGNG, CPTCNGVG, CPKCHGSG, and CTKCHGQG.

The protein belongs to the DnaJ family. As to quaternary structure, homodimer. Zn(2+) serves as cofactor.

The protein localises to the cytoplasm. Participates actively in the response to hyperosmotic and heat shock by preventing the aggregation of stress-denatured proteins and by disaggregating proteins, also in an autonomous, DnaK-independent fashion. Unfolded proteins bind initially to DnaJ; upon interaction with the DnaJ-bound protein, DnaK hydrolyzes its bound ATP, resulting in the formation of a stable complex. GrpE releases ADP from DnaK; ATP binding to DnaK triggers the release of the substrate protein, thus completing the reaction cycle. Several rounds of ATP-dependent interactions between DnaJ, DnaK and GrpE are required for fully efficient folding. Also involved, together with DnaK and GrpE, in the DNA replication of plasmids through activation of initiation proteins. The polypeptide is Chaperone protein DnaJ (Cupriavidus metallidurans (strain ATCC 43123 / DSM 2839 / NBRC 102507 / CH34) (Ralstonia metallidurans)).